The following is a 118-amino-acid chain: Basic phospholipase A2 PA-10A (118 aa).

Disulfide bonds link C11/C71, C27/C117, C29/C45, C44/C98, C51/C91, C60/C84, and C78/C89. Ca(2+) contacts are provided by Y28, G30, and G32. H48 is a catalytic residue. D49 lines the Ca(2+) pocket. D92 is a catalytic residue.

Belongs to the phospholipase A2 family. Group I subfamily. D49 sub-subfamily. The cofactor is Ca(2+). As to expression, expressed by the venom gland.

The protein resides in the secreted. The enzyme catalyses a 1,2-diacyl-sn-glycero-3-phosphocholine + H2O = a 1-acyl-sn-glycero-3-phosphocholine + a fatty acid + H(+). In terms of biological role, PLA2 catalyzes the calcium-dependent hydrolysis of the 2-acyl groups in 3-sn-phosphoglycerides. This Pseudechis australis (Mulga snake) protein is Basic phospholipase A2 PA-10A.